A 302-amino-acid chain; its full sequence is Pyridoxal kinase (302 aa).

3 residues coordinate substrate: serine 10, threonine 45, and tyrosine 122. Residues 181–182 (TS) and 215–227 (VGPK…TGTG) contribute to the ATP site. Substrate is bound at residue aspartate 228.

The protein belongs to the pyridoxine kinase family. Homodimer. It depends on a divalent metal cation as a cofactor.

Its subcellular location is the cytoplasm. It carries out the reaction pyridoxal + ATP = pyridoxal 5'-phosphate + ADP + H(+). It participates in cofactor metabolism; pyridoxal 5'-phosphate salvage; pyridoxal 5'-phosphate from pyridoxal: step 1/1. Its function is as follows. Required for synthesis of pyridoxal-5-phosphate from vitamin B6. In Dictyostelium discoideum (Social amoeba), this protein is Pyridoxal kinase (pykA).